A 396-amino-acid chain; its full sequence is 1-deoxy-D-xylulose 5-phosphate reductoisomerase (396 aa).

Positions 10, 11, 12, 13, 38, and 123 each coordinate NADPH. Residue lysine 124 participates in 1-deoxy-D-xylulose 5-phosphate binding. Glutamate 125 provides a ligand contact to NADPH. Aspartate 149 serves as a coordination point for Mn(2+). Residues serine 150, glutamate 151, serine 185, and histidine 208 each coordinate 1-deoxy-D-xylulose 5-phosphate. Glutamate 151 is a Mn(2+) binding site. Residue glycine 214 coordinates NADPH. 1-deoxy-D-xylulose 5-phosphate is bound by residues serine 221, asparagine 226, lysine 227, and glutamate 230. Glutamate 230 lines the Mn(2+) pocket.

The protein belongs to the DXR family. Mg(2+) is required as a cofactor. The cofactor is Mn(2+).

It carries out the reaction 2-C-methyl-D-erythritol 4-phosphate + NADP(+) = 1-deoxy-D-xylulose 5-phosphate + NADPH + H(+). The protein operates within isoprenoid biosynthesis; isopentenyl diphosphate biosynthesis via DXP pathway; isopentenyl diphosphate from 1-deoxy-D-xylulose 5-phosphate: step 1/6. In terms of biological role, catalyzes the NADPH-dependent rearrangement and reduction of 1-deoxy-D-xylulose-5-phosphate (DXP) to 2-C-methyl-D-erythritol 4-phosphate (MEP). The chain is 1-deoxy-D-xylulose 5-phosphate reductoisomerase from Shewanella piezotolerans (strain WP3 / JCM 13877).